A 411-amino-acid polypeptide reads, in one-letter code: Citrate synthase (411 aa).

Residues His-304 and Asp-363 contribute to the active site.

This sequence belongs to the citrate synthase family.

It catalyses the reaction oxaloacetate + acetyl-CoA + H2O = citrate + CoA + H(+). It participates in carbohydrate metabolism; tricarboxylic acid cycle; isocitrate from oxaloacetate: step 1/2. The chain is Citrate synthase (gltA) from Rickettsia massiliae.